A 348-amino-acid chain; its full sequence is Succinoglycan biosynthesis protein ExoO (348 aa).

The interval 322 to 348 is disordered; sequence HSAPRAAPVTAAAERSPLGNDPRISKG. Residues 324 to 334 are compositionally biased toward low complexity; the sequence is APRAAPVTAAA.

It belongs to the glycosyltransferase 2 family.

It is found in the cytoplasm. It participates in glycan metabolism; exopolysaccharide biosynthesis. Functionally, glycosyltransferase required for the synthesis of succinoglycan (EPS I). Needed for the addition of the fifth sugar (glucose), catalyzes the formation of a beta-1,6 linkage between the fourth and fifth sugar. The polypeptide is Succinoglycan biosynthesis protein ExoO (exoO) (Rhizobium meliloti (strain 1021) (Ensifer meliloti)).